Consider the following 115-residue polypeptide: Nitrogenase-stabilizing/protective protein NifW (115 aa).

Belongs to the NifW family. Homotrimer; associates with NifD.

Functionally, may protect the nitrogenase Fe-Mo protein from oxidative damage. This is Nitrogenase-stabilizing/protective protein NifW from Methylobacterium sp. (strain 4-46).